A 303-amino-acid polypeptide reads, in one-letter code: Porphobilinogen deaminase (303 aa).

C240 bears the S-(dipyrrolylmethanemethyl)cysteine mark.

It belongs to the HMBS family. Monomer. Dipyrromethane is required as a cofactor.

It catalyses the reaction 4 porphobilinogen + H2O = hydroxymethylbilane + 4 NH4(+). Its pathway is porphyrin-containing compound metabolism; protoporphyrin-IX biosynthesis; coproporphyrinogen-III from 5-aminolevulinate: step 2/4. Functionally, tetrapolymerization of the monopyrrole PBG into the hydroxymethylbilane pre-uroporphyrinogen in several discrete steps. The chain is Porphobilinogen deaminase from Stenotrophomonas maltophilia (strain K279a).